A 196-amino-acid polypeptide reads, in one-letter code: Homeobox protein ANF-1 (196 aa).

Residues 119–178 (GRRPRTAFTRNQIEVLENVFKMNSYPGIDIREELARKLDLEEDRIQIWFQNRRAKLKRSH) constitute a DNA-binding region (homeobox).

The protein belongs to the ANF homeobox family.

It localises to the nucleus. Its function is as follows. May be involved in the early patterning of the most anterior region of the main embryonic body axis. The protein is Homeobox protein ANF-1 of Gallus gallus (Chicken).